Reading from the N-terminus, the 299-residue chain is Prolyl 4-hydroxylase 2 (299 aa).

Topologically, residues 1-5 (MSMSR) are cytoplasmic. The chain crosses the membrane as a helical; Signal-anchor for type II membrane protein span at residues 6 to 26 (LGLLLFVAILLVLLQSSTCLI). The Lumenal segment spans residues 27-299 (SSPSSIINPS…GNCRRSCKAC (273 aa)). In terms of domain architecture, Fe2OG dioxygenase spans 121–246 (NGEDLQVLRY…KWSATKWIHV (126 aa)). Fe cation contacts are provided by His-139 and Asp-141. The N-linked (GlcNAc...) asparagine glycan is linked to Asn-165. His-227 serves as a coordination point for Fe cation. Residue Lys-237 participates in 2-oxoglutarate binding. 2 N-linked (GlcNAc...) asparagine glycosylation sites follow: Asn-258 and Asn-263. One can recognise a ShKT domain in the interval 259 to 299 (CTDVNESCERWAVLGECGKNPEYMVGTPEIPGNCRRSCKAC). 3 disulfides stabilise this stretch: Cys-259/Cys-299, Cys-266/Cys-292, and Cys-275/Cys-296.

The protein belongs to the P4HA family. Fe(2+) serves as cofactor. Requires L-ascorbate as cofactor. In terms of tissue distribution, expressed in epidermal root hair cells (trichoblasts).

The protein localises to the endoplasmic reticulum membrane. It localises to the golgi apparatus membrane. It catalyses the reaction L-prolyl-[collagen] + 2-oxoglutarate + O2 = trans-4-hydroxy-L-prolyl-[collagen] + succinate + CO2. In terms of biological role, catalyzes the post-translational formation of 4-hydroxyproline in -Xaa-Pro-Gly- sequences in proline-rich peptide sequences of plant glycoproteins and other proteins. Hydroxyprolines are important constituent of many plant cell wall glycoproteins such as extensins, hydroxyproline-rich glycoproteins, lectins and arabinogalactan proteins. Possesses high affinity for leucine-rich repeat and proline-rich extensins of root cell walls that are essential for root hair development. Hydroxyprolines define the subsequent O-glycosylation sites by arabinosyltransferases which elongate the O-arabinosides on extensins. Has low affinity for the substrates tested in vitro. This Arabidopsis thaliana (Mouse-ear cress) protein is Prolyl 4-hydroxylase 2.